The primary structure comprises 142 residues: Group IIE secretory phospholipase A2 (142 aa).

The first 19 residues, 1–19 (MKSPHVLVFLCLLVALVTG), serve as a signal peptide directing secretion. Residues aspartate 41, glycine 43, tyrosine 45, glycine 47, and glycine 49 each contribute to the Ca(2+) site. 7 disulfides stabilise this stretch: cysteine 44–cysteine 135, cysteine 46–cysteine 62, cysteine 61–cysteine 115, cysteine 67–cysteine 142, cysteine 68–cysteine 108, cysteine 77–cysteine 101, and cysteine 95–cysteine 106. Histidine 65 is a catalytic residue. Aspartate 66 provides a ligand contact to Ca(2+). Aspartate 109 is a catalytic residue. Residues tyrosine 130 and asparagine 132 each coordinate Ca(2+).

This sequence belongs to the phospholipase A2 family. The cofactor is Ca(2+). Restricted to the brain, heart, lung, and placenta.

Its subcellular location is the secreted. The protein resides in the cytoplasm. It catalyses the reaction a 1,2-diacyl-sn-glycero-3-phosphoethanolamine + H2O = a 1-acyl-sn-glycero-3-phosphoethanolamine + a fatty acid + H(+). The catalysed reaction is 1-hexadecanoyl-2-(9Z-octadecenoyl)-sn-glycero-3-phosphoethanolamine + H2O = 1-hexadecanoyl-sn-glycero-3-phosphoethanolamine + (9Z)-octadecenoate + H(+). The enzyme catalyses 1-hexadecanoyl-2-(9Z,12Z-octadecadienoyl)-sn-glycero-3-phosphoethanolamine + H2O = 1-hexadecanoyl-sn-glycero-3-phosphoethanolamine + (9Z,12Z)-octadecadienoate + H(+). It carries out the reaction 1-hexadecanoyl-2-(5Z,8Z,11Z,14Z-eicosatetraenoyl)-sn-glycero-3-phosphoethanolamine + H2O = 1-hexadecanoyl-sn-glycero-3-phosphoethanolamine + (5Z,8Z,11Z,14Z)-eicosatetraenoate + H(+). It catalyses the reaction 1,2-dihexadecanoyl-sn-glycero-3-phospho-(1'-sn-glycerol) + H2O = 1-hexadecanoyl-sn-glycero-3-phospho-(1'-sn-glycerol) + hexadecanoate + H(+). The catalysed reaction is 1-hexadecanoyl-2-(9Z-octadecenoyl)-sn-glycero-3-phosphoglycerol + H2O = 1-hexadecanoyl-sn-glycero-3-phosphoglycerol + (9Z)-octadecenoate + H(+). The enzyme catalyses a 1,2-diacyl-sn-glycero-3-phosphocholine + H2O = a 1-acyl-sn-glycero-3-phosphocholine + a fatty acid + H(+). It carries out the reaction 1,2-dihexadecanoyl-sn-glycero-3-phosphocholine + H2O = 1-hexadecanoyl-sn-glycero-3-phosphocholine + hexadecanoate + H(+). It catalyses the reaction 1-hexadecanoyl-2-(9Z-octadecenoyl)-sn-glycero-3-phosphocholine + H2O = 1-hexadecanoyl-sn-glycero-3-phosphocholine + (9Z)-octadecenoate + H(+). The catalysed reaction is 1-hexadecanoyl-2-(9Z,12Z-octadecadienoyl)-sn-glycero-3-phosphocholine + H2O = (9Z,12Z)-octadecadienoate + 1-hexadecanoyl-sn-glycero-3-phosphocholine + H(+). The enzyme catalyses 1-hexadecanoyl-2-(4Z,7Z,10Z,13Z,16Z,19Z-docosahexaenoyl)-sn-glycero-3-phosphocholine + H2O = (4Z,7Z,10Z,13Z,16Z,19Z)-docosahexaenoate + 1-hexadecanoyl-sn-glycero-3-phosphocholine + H(+). In terms of biological role, secretory calcium-dependent phospholipase A2 that primarily targets extracellular phospholipids. Hydrolyzes the ester bond of the fatty acyl group attached at sn-2 position of phospholipids (phospholipase A2 activity), releasing various unsaturated fatty acids including oleoate, linoleoate, arachidonate, docosahexaenoate and lysophosphatidylethanolamines in preference to lysophosphatidylcholines. In response to high-fat diet, hydrolyzes minor lipoprotein phospholipids including phosphatidylserines, phosphatidylinositols and phosphatidylglycerols, altering lipoprotein composition and fat storage in adipose tissue and liver. May act in an autocrine and paracrine manner. Contributes to lipid remodeling of cellular membranes and generation of lipid mediators involved in pathogen clearance. Cleaves sn-2 fatty acyl chains of phosphatidylglycerols and phosphatidylethanolamines, which are major components of membrane phospholipids in bacteria. Acts as a hair follicle phospholipase A2. Selectively releases lysophosphatidylethanolamines (LPE) and various unsaturated fatty acids in skin to regulate hair follicle homeostasis. May regulate the inflammatory response by releasing arachidonate, a precursor of prostaglandins and leukotrienes. Upon allergen exposure, may participate in allergic inflammatory response by enhancing leukotriene C4 synthesis and degranulation in mast cells. The protein is Group IIE secretory phospholipase A2 (PLA2G2E) of Homo sapiens (Human).